We begin with the raw amino-acid sequence, 488 residues long: Alkaline nuclease (488 aa).

Belongs to the herpesviridae alkaline nuclease family. Interacts with major DNA-binding protein; this interaction increases the nuclease processivity of the alkaline exonuclease.

The protein localises to the host nucleus. It is found in the host cytoplasm. Its function is as follows. Plays a role in processing non linear or branched viral DNA intermediates in order to promote the production of mature packaged unit-length linear progeny viral DNA molecules. Exhibits endonuclease and exonuclease activities and accepts both double-stranded and single-stranded DNA as substrate. Exonuclease digestion of DNA is in the 5'-&gt; 3' direction and the products are 5'-monophosphate nucleosides. Additionally, forms a recombinase with the major DNA-binding protein, which displays strand exchange activity. In Homo sapiens (Human), this protein is Alkaline nuclease (U70).